The sequence spans 79 residues: CDC42 small effector protein 1 (79 aa).

Residues Cys10 and Cys11 are each lipidated (S-palmitoyl cysteine). A CRIB domain is found at 30-43 (IGEPMNFVHLTHIG). The interval 48 to 79 (GAGDGLAMTGAVQEQMRSKGNRDRPWSNSRGL) is disordered. Positions 63–72 (MRSKGNRDRP) are enriched in basic and acidic residues.

It belongs to the CDC42SE/SPEC family. Interacts with CDC42 (in GTP-bound form). Interacts weakly with RAC1 and not at all with RHOA.

The protein localises to the cytoplasm. It localises to the cytoskeleton. It is found in the cell membrane. In terms of biological role, probably involved in the organization of the actin cytoskeleton by acting downstream of CDC42, inducing actin filament assembly. Alters CDC42-induced cell shape changes. In activated T-cells, may play a role in CDC42-mediated F-actin accumulation at the immunological synapse. May play a role in early contractile events in phagocytosis in macrophages. This is CDC42 small effector protein 1 (CDC42SE1) from Bos taurus (Bovine).